The following is a 398-amino-acid chain: Cysteine desulfurase (398 aa).

Pyridoxal 5'-phosphate-binding positions include 74–75 (GT), Asn-155, Gln-182, and 202–204 (CGH). Lys-205 is subject to N6-(pyridoxal phosphate)lysine. A compositionally biased stretch (basic and acidic residues) spans 230–244 (GHQERSRRAGNGERA). A disordered region spans residues 230–253 (GHQERSRRAGNGERAGHRRAGGGA). Cys-327 functions as the Cysteine persulfide intermediate in the catalytic mechanism. Cys-327 is a [2Fe-2S] cluster binding site.

The protein belongs to the class-V pyridoxal-phosphate-dependent aminotransferase family. NifS/IscS subfamily. As to quaternary structure, homodimer. Pyridoxal 5'-phosphate serves as cofactor.

The catalysed reaction is (sulfur carrier)-H + L-cysteine = (sulfur carrier)-SH + L-alanine. Functionally, catalyzes the removal of elemental sulfur atoms from cysteine to produce alanine. Seems to participate in the biosynthesis of the nitrogenase metalloclusters by providing the inorganic sulfur required for the Fe-S core formation. This Azospirillum brasilense protein is Cysteine desulfurase.